Here is a 730-residue protein sequence, read N- to C-terminus: MDAKTDDKDAGKCPFSSGSHAHRNRDWWPDQLDIQVLHHNSKKSDPLGEAFNYAEEFKKLDLAALKQDLTALMTDSQDWWPADFGHYGGLFIRLAWHSAGTYRISDGRGGAGAGQQRFAPLNSWPDNANLDKARRLLWPIKQKYGNKISWADLFVLSGNVALESMGFKTFGFAGGRADTWEPEELYWGPEGTWLGDSRYSGERELSDPLGAVQMGLIYVNPEGPNGNPDPVGSAKDIRETFYRMAMNDEETVALIAGGHTFGKTHGAGDPSLLGPDPEAGALEDQGLGWKSGYGTGFGADAITGGPEVIWSQEPTKWSNHFFENLFNFDYELTKSPAGAQQWVAKNAEPSIPDPFDPSKKRLPTMLTSDLALRFDPIYEKISRRFFENPDQFADAFARAWYKLTHRDMGPVPRYLGPEVPKEVLLWQDPVPAVDHELVSEQDIAALKAKILASGLSVAQLVSAAWASASTFRGSDKRGGANGGRIRLSPQKDWEVNHPAELAQVLSKLEAIQSEFNAQGGGKKVSIADLIVLGGAAAIEKAAQEAGTAVTVPFTPGRTDASQEQTDVESFKPLEPRADGFRNYVSSIRHQFMKPEEALVDKAQLLKLTGPELTVLVGGLRVLGANYGHTTHGVLTDRPERLSNDFFVNLLDMKYAWAPSPTTTGIYEARDRKSGELKWTGTRVDLIFGSHSQLRAFAEVYAQADAKEKFVHDFVAAWTKVMNADRFDIVR.

The span at 1–11 shows a compositional bias: basic and acidic residues; the sequence is MDAKTDDKDAG. Positions 1–21 are cleaved as a signal peptide; it reads MDAKTDDKDAGKCPFSSGSHA. Residues 1–24 form a disordered region; that stretch reads MDAKTDDKDAGKCPFSSGSHAHRN. The tryptophyl-tyrosyl-methioninium (Trp-Tyr) (with M-244) cross-link spans 96–218; it reads WHSAGTYRIS…LGAVQMGLIY (123 aa). The active-site Proton acceptor is the histidine 97. Residues 218–244 constitute a cross-link (tryptophyl-tyrosyl-methioninium (Tyr-Met) (with W-96)); the sequence is YVNPEGPNGNPDPVGSAKDIRETFYRM. Histidine 259 contributes to the heme b binding site.

Belongs to the peroxidase family. Peroxidase/catalase subfamily. Homodimer or homotetramer. Requires heme b as cofactor. Formation of the three residue Trp-Tyr-Met cross-link is important for the catalase, but not the peroxidase activity of the enzyme.

It catalyses the reaction H2O2 + AH2 = A + 2 H2O. The catalysed reaction is 2 H2O2 = O2 + 2 H2O. Its function is as follows. Bifunctional enzyme with both catalase and broad-spectrum peroxidase activity. The chain is Catalase-peroxidase from Rhodopseudomonas palustris (strain BisA53).